Consider the following 500-residue polypeptide: NAD(P)H-quinone oxidoreductase chain 4, chloroplastic (500 aa).

The next 15 membrane-spanning stretches (helical) occupy residues 4-24 (FYWLTIIVVLPISAGSLIALL), 35-55 (YTICICLFELLLTTYVFCYHF), 80-100 (LGIDGLSIGPILLTGFITTLA), 113-130 (LFHFLMLAMYSGQIGSFS), 134-154 (LLLFFIMWELELIPVYLLLSM), 167-187 (FILYTAGGSIFLLMGVLGMGL), 208-228 (ALEIIFYFGFLIAYAVKSPII), 242-262 (HYSTCMLLAGILLKMGAYGLV), 274-294 (SIFSPWLMIVGTIQIIYAALT), 305-325 (IAYSSVSHMGFIIIGISSITD), 330-350 (GAILQIISHGFIGAALFFLAG), 364-384 (MGGIAILMPRIFTMFSSFSMA), 386-406 (LALPGMSGFVAEFVIFLGIIT), 416-436 (ILITFVMAIGMILTPIYSLSM), and 462-482 (IFIFMCILLPIIGIGIYPDFV).

This sequence belongs to the complex I subunit 4 family.

Its subcellular location is the plastid. It localises to the chloroplast thylakoid membrane. The enzyme catalyses a plastoquinone + NADH + (n+1) H(+)(in) = a plastoquinol + NAD(+) + n H(+)(out). It carries out the reaction a plastoquinone + NADPH + (n+1) H(+)(in) = a plastoquinol + NADP(+) + n H(+)(out). This is NAD(P)H-quinone oxidoreductase chain 4, chloroplastic from Nymphaea alba (White water-lily).